The following is a 513-amino-acid chain: Melianol synthase CYP71BQ4 (513 aa).

A helical transmembrane segment spans residues 10-30 (MLHLPSLPVLLSFLLFLLMLI). Position 451 (cysteine 451) interacts with heme.

This sequence belongs to the cytochrome P450 family. Heme serves as cofactor. In terms of tissue distribution, accumulates in mature fruits and in juice vesicles.

The protein resides in the membrane. It catalyses the reaction dihydroniloticin + 2 reduced [NADPH--hemoprotein reductase] + 2 O2 = melianol + 2 oxidized [NADPH--hemoprotein reductase] + 3 H2O + 2 H(+). The protein operates within secondary metabolite biosynthesis; terpenoid biosynthesis. In terms of biological role, monooxygenase involved in the biosynthesis of limonoids triterpene natural products such as limonin, a compound with insecticidal activity responsible for the bitter taste in citrus. Catalyzes the conversion of dihydroniloticin to the protolimonoid melianol. The protein is Melianol synthase CYP71BQ4 of Citrus sinensis (Sweet orange).